The primary structure comprises 674 residues: tRNA 5-methylaminomethyl-2-thiouridine biosynthesis bifunctional protein MnmC (674 aa).

The interval 1–248 (MAASSLPSHN…KREMCFGRYA (248 aa)) is tRNA (mnm(5)s(2)U34)-methyltransferase. The tract at residues 276-674 (IGAGLAGATV…AIRHWRSGKR (399 aa)) is FAD-dependent cmnm(5)s(2)U34 oxidoreductase.

In the N-terminal section; belongs to the methyltransferase superfamily. tRNA (mnm(5)s(2)U34)-methyltransferase family. It in the C-terminal section; belongs to the DAO family. It depends on FAD as a cofactor.

Its subcellular location is the cytoplasm. The catalysed reaction is 5-aminomethyl-2-thiouridine(34) in tRNA + S-adenosyl-L-methionine = 5-methylaminomethyl-2-thiouridine(34) in tRNA + S-adenosyl-L-homocysteine + H(+). Its function is as follows. Catalyzes the last two steps in the biosynthesis of 5-methylaminomethyl-2-thiouridine (mnm(5)s(2)U) at the wobble position (U34) in tRNA. Catalyzes the FAD-dependent demodification of cmnm(5)s(2)U34 to nm(5)s(2)U34, followed by the transfer of a methyl group from S-adenosyl-L-methionine to nm(5)s(2)U34, to form mnm(5)s(2)U34. The chain is tRNA 5-methylaminomethyl-2-thiouridine biosynthesis bifunctional protein MnmC from Hydrogenovibrio crunogenus (strain DSM 25203 / XCL-2) (Thiomicrospira crunogena).